Consider the following 341-residue polypeptide: Ferredoxin--NADP reductase (341 aa).

FAD contacts are provided by glutamate 36, glutamine 44, phenylalanine 49, valine 89, phenylalanine 123, aspartate 289, and threonine 329.

This sequence belongs to the ferredoxin--NADP reductase type 2 family. Homodimer. Requires FAD as cofactor.

It catalyses the reaction 2 reduced [2Fe-2S]-[ferredoxin] + NADP(+) + H(+) = 2 oxidized [2Fe-2S]-[ferredoxin] + NADPH. The sequence is that of Ferredoxin--NADP reductase from Ligilactobacillus salivarius (strain UCC118) (Lactobacillus salivarius).